A 495-amino-acid chain; its full sequence is UDP-N-acetylmuramoyl-L-alanyl-D-glutamate--2,6-diaminopimelate ligase (495 aa).

UDP-N-acetyl-alpha-D-muramoyl-L-alanyl-D-glutamate contacts are provided by residues Leu-28, Ser-30, and 45 to 47 (HRV). 117–123 (GTNGKTT) lines the ATP pocket. Residues Asn-158, 159-160 (TT), Ser-186, Gln-192, and Arg-194 contribute to the UDP-N-acetyl-alpha-D-muramoyl-L-alanyl-D-glutamate site. Residue Lys-226 is modified to N6-carboxylysine. Residues Arg-394, 418–421 (DNPR), Gly-469, and Glu-473 each bind meso-2,6-diaminopimelate. The Meso-diaminopimelate recognition motif signature appears at 418 to 421 (DNPR).

Belongs to the MurCDEF family. MurE subfamily. Mg(2+) is required as a cofactor. In terms of processing, carboxylation is probably crucial for Mg(2+) binding and, consequently, for the gamma-phosphate positioning of ATP.

It is found in the cytoplasm. The catalysed reaction is UDP-N-acetyl-alpha-D-muramoyl-L-alanyl-D-glutamate + meso-2,6-diaminopimelate + ATP = UDP-N-acetyl-alpha-D-muramoyl-L-alanyl-gamma-D-glutamyl-meso-2,6-diaminopimelate + ADP + phosphate + H(+). Its pathway is cell wall biogenesis; peptidoglycan biosynthesis. Its function is as follows. Catalyzes the addition of meso-diaminopimelic acid to the nucleotide precursor UDP-N-acetylmuramoyl-L-alanyl-D-glutamate (UMAG) in the biosynthesis of bacterial cell-wall peptidoglycan. The polypeptide is UDP-N-acetylmuramoyl-L-alanyl-D-glutamate--2,6-diaminopimelate ligase (Histophilus somni (strain 129Pt) (Haemophilus somnus)).